A 306-amino-acid polypeptide reads, in one-letter code: tRNA (guanine-N(7)-)-methyltransferase (306 aa).

Residues 1–19 (MSSTAPLDSKATEQITTAA) show a composition bias toward polar residues. Residues 1–65 (MSSTAPLDSK…EASPELPSDE (65 aa)) are disordered. Residues G121, 144–145 (EI), 180–181 (NA), and C200 contribute to the S-adenosyl-L-methionine site. Residue D203 is part of the active site. 278–280 (TEE) provides a ligand contact to S-adenosyl-L-methionine.

It belongs to the class I-like SAM-binding methyltransferase superfamily. TrmB family. Forms a complex with TRM82.

The protein resides in the nucleus. The catalysed reaction is guanosine(46) in tRNA + S-adenosyl-L-methionine = N(7)-methylguanosine(46) in tRNA + S-adenosyl-L-homocysteine. The protein operates within tRNA modification; N(7)-methylguanine-tRNA biosynthesis. Functionally, catalyzes the formation of N(7)-methylguanine at position 46 (m7G46) in tRNA. The chain is tRNA (guanine-N(7)-)-methyltransferase from Lodderomyces elongisporus (strain ATCC 11503 / CBS 2605 / JCM 1781 / NBRC 1676 / NRRL YB-4239) (Yeast).